The following is a 304-amino-acid chain: Aspartate carbamoyltransferase catalytic subunit (304 aa).

The carbamoyl phosphate site is built by R55 and T56. K83 contacts L-aspartate. Carbamoyl phosphate contacts are provided by R105, H133, and Q136. Residues R166 and R220 each contribute to the L-aspartate site. Carbamoyl phosphate contacts are provided by G261 and P262.

Belongs to the aspartate/ornithine carbamoyltransferase superfamily. ATCase family. Heterododecamer (2C3:3R2) of six catalytic PyrB chains organized as two trimers (C3), and six regulatory PyrI chains organized as three dimers (R2).

It catalyses the reaction carbamoyl phosphate + L-aspartate = N-carbamoyl-L-aspartate + phosphate + H(+). The protein operates within pyrimidine metabolism; UMP biosynthesis via de novo pathway; (S)-dihydroorotate from bicarbonate: step 2/3. Its function is as follows. Catalyzes the condensation of carbamoyl phosphate and aspartate to form carbamoyl aspartate and inorganic phosphate, the committed step in the de novo pyrimidine nucleotide biosynthesis pathway. The chain is Aspartate carbamoyltransferase catalytic subunit from Caldanaerobacter subterraneus subsp. tengcongensis (strain DSM 15242 / JCM 11007 / NBRC 100824 / MB4) (Thermoanaerobacter tengcongensis).